Consider the following 448-residue polypeptide: N-succinylarginine dihydrolase (448 aa).

Substrate-binding positions include 19 to 28 (GGLSYGNVAS), asparagine 110, and 137 to 138 (HR). Glutamate 174 is a catalytic residue. Arginine 214 serves as a coordination point for substrate. Residue histidine 250 is part of the active site. The substrate site is built by aspartate 252 and asparagine 365. The active-site Nucleophile is the cysteine 371.

It belongs to the succinylarginine dihydrolase family. In terms of assembly, homodimer.

The enzyme catalyses N(2)-succinyl-L-arginine + 2 H2O + 2 H(+) = N(2)-succinyl-L-ornithine + 2 NH4(+) + CO2. It participates in amino-acid degradation; L-arginine degradation via AST pathway; L-glutamate and succinate from L-arginine: step 2/5. In terms of biological role, catalyzes the hydrolysis of N(2)-succinylarginine into N(2)-succinylornithine, ammonia and CO(2). The protein is N-succinylarginine dihydrolase of Pseudomonas aeruginosa (strain UCBPP-PA14).